The sequence spans 664 residues: Intraflagellar transport protein 70A2 (664 aa).

TPR repeat units lie at residues 11–44 (DGEF…SPRS), 45–78 (RAGL…HPEL), 153–186 (PDGL…SGYQ), 188–220 (DVSY…GIRQ), 395–423 (QVQE…EKYI), 424–456 (PVLM…CNDH), and 458–491 (VWKL…NYDN). A coiled-coil region spans residues 507–534 (YIMTSQNEEAEELMRKIEKEEEQLSYGD). A TPR 8 repeat occupies 543 to 576 (CIVNLVIGTLYCAKGNYDFGISRVIKSLEPYHKK).

Belongs to the TTC30/dfy-1/fleer family. As to quaternary structure, interacts wit the IFT B complex component IFT52.

The protein resides in the cell projection. The protein localises to the cilium. In terms of biological role, required for polyglutamylation of axonemal tubulin. Plays a role in anterograde intraflagellar transport (IFT), the process by which cilia precursors are transported from the base of the cilium to the site of their incorporation at the tip. This Rattus norvegicus (Rat) protein is Intraflagellar transport protein 70A2 (Ift70a2).